A 551-amino-acid polypeptide reads, in one-letter code: Trehalose-6-phosphate hydrolase (551 aa).

Residue Asp-200 is the Nucleophile of the active site. Catalysis depends on Glu-251, which acts as the Proton donor.

Belongs to the glycosyl hydrolase 13 family.

The protein localises to the cytoplasm. The enzyme catalyses alpha,alpha-trehalose 6-phosphate + H2O = D-glucose 6-phosphate + D-glucose. Hydrolyzes trehalose-6-phosphate to glucose and glucose 6-phosphate. Can also very effectively hydrolyze p-nitrophenyl-alpha-D-glucopyranoside, but it does not recognize trehalose, sucrose, maltose, isomaltose, or maltodextrins. The chain is Trehalose-6-phosphate hydrolase (treC) from Escherichia coli (strain K12).